The following is a 387-amino-acid chain: MAAAAAAAAICGEDETAARVGCTGEWAGGIERVDLGERKEAVAAAGAGKRSVYLMDCAPVWGCASTRGRSAEMEDASAAVPRFADVPVRLLASRRDLDALGLDADALRLPAHLFGVFDGHGGAEVANYCRERIHVVLSEELKRLGKNLGEMGEVDMKEHWDDVFTKCFQRVDDEVSGRVTRVVNGGGEVRSEPVTAENVGSTAVVALVCSSHVVVANCGDSRIVLCRGKEPVALSIDHKPDRKDERARIEAQGGKVIQWNGYRVSGILAMSRSIGDRYLKPFVIPKPEVMVVPRAKDDDCLILASDGLWDVVSNEEACKVARRQILLWHKNNGAASPLSDEGEGSTDPAAQAAADYLMRLALKKGSEDNITVIVVDLKPRKKLKNIS.

The PPM-type phosphatase domain occupies 60-377; sequence VWGCASTRGR…DNITVIVVDL (318 aa). Residues aspartate 118 and glycine 119 each coordinate Mn(2+). Residues 264 to 268 carry the Modulates binding affinity to PYR/PYL/RCAR abscisic acid intracellular receptors motif; it reads VSGIL. Mn(2+)-binding residues include aspartate 306 and aspartate 368.

This sequence belongs to the PP2C family. In terms of assembly, interacts with PYL3, PYL5, PYL9 and PYL10. Binding to PYL3, PYL5, PYL9 and PYL10 is dependent on the presence of abscisic acid (ABA). Interacts with SAPK10. The cofactor is Mg(2+). Mn(2+) is required as a cofactor.

The catalysed reaction is O-phospho-L-seryl-[protein] + H2O = L-seryl-[protein] + phosphate. It carries out the reaction O-phospho-L-threonyl-[protein] + H2O = L-threonyl-[protein] + phosphate. Protein phosphatase involved in abscisic acid (ABA) signaling. Together with PYL3 and SAPK10, may form an ABA signaling module involved in stress response. In Oryza sativa subsp. japonica (Rice), this protein is Protein phosphatase 2C 50.